Consider the following 422-residue polypeptide: 5-hydroxytryptamine receptor 1A (422 aa).

Positions 1–23 are disordered; it reads MDVLSPGQGNNTTSPPAPFETGG. Residues 1-38 lie on the Extracellular side of the membrane; that stretch reads MDVLSPGQGNNTTSPPAPFETGGNTTGISDVTFSYQVI. 3 N-linked (GlcNAc...) asparagine glycosylation sites follow: asparagine 10, asparagine 11, and asparagine 24. A helical transmembrane segment spans residues 39–59; that stretch reads TSLLLGTLIFCAVLGNACVVA. The Cytoplasmic segment spans residues 60 to 73; that stretch reads AIALERSLQNVANY. The chain crosses the membrane as a helical span at residues 74-98; the sequence is LIGSLAVTDLMVSVLVLPMAALYQV. Over 99–107 the chain is Extracellular; the sequence is LNKWTLGQV. Residues 108 to 132 form a helical membrane-spanning segment; sequence TCDLFIALDVLCCTSSILHLCAIAL. Cysteines 109 and 187 form a disulfide. Residues aspartate 116 and cysteine 120 each contribute to the serotonin site. Positions 133-135 match the DRY motif; important for ligand-induced conformation changes motif; the sequence is DRY. The Cytoplasmic segment spans residues 133-152; the sequence is DRYWAITDPIDYVNKRTPRR. A helical transmembrane segment spans residues 153 to 174; that stretch reads AAALISLTWLIGFLISIPPMLG. The Extracellular segment spans residues 175-193; that stretch reads WRTPEDRSDPDACTISKDH. Residues 194–216 form a helical membrane-spanning segment; the sequence is GYTIYSTFGAFYIPLLLMLVLYG. Residues 217–346 lie on the Cytoplasmic side of the membrane; it reads RIFRAARFRI…LARERKTVKT (130 aa). Residues 235–262 form a disordered region; the sequence is KTGADTRHGASPAPQPKKSVNGESGSRN. Residues threonine 314, lysine 345, threonine 346, and glycine 352 each contribute to the 1D-myo-inositol 4-phosphate site. A helical transmembrane segment spans residues 347 to 370; the sequence is LGIIMGTFILCWLPFFIVALVLPF. The Extracellular portion of the chain corresponds to 371-378; that stretch reads CESSCHMP. A helical transmembrane segment spans residues 379–403; the sequence is TLLGAIINWLGYSNSLLNPVIYAYF. The NPxxY motif; important for ligand-induced conformation changes and signaling motif lies at 396–400; that stretch reads NPVIY. 3 residues coordinate 1D-myo-inositol 4-phosphate: phenylalanine 403, asparagine 404, and lysine 405. Residues 404–422 lie on the Cytoplasmic side of the membrane; sequence NKDFQNAFKKIIKCKFCRQ.

Belongs to the G-protein coupled receptor 1 family. 5-hydroxytryptamine receptor subfamily. HTR1A sub-subfamily. Heterodimer; heterodimerizes with GPER1. Interacts with YIF1B. Interacts with GPR39 and GALR1.

It localises to the cell membrane. The protein localises to the cell projection. The protein resides in the dendrite. G-protein coupled receptor activity is regulated by lipids: phosphatidylinositol 4-phosphate increases HTR1A-mediated activity. Its function is as follows. G-protein coupled receptor for 5-hydroxytryptamine (serotonin). Also functions as a receptor for various drugs and psychoactive substances. Ligand binding causes a conformation change that triggers signaling via guanine nucleotide-binding proteins (G proteins) and modulates the activity of downstream effectors, such as adenylate cyclase. HTR1A is coupled to G(i)/G(o) G alpha proteins and mediates inhibitory neurotransmission: signaling inhibits adenylate cyclase activity and activates a phosphatidylinositol-calcium second messenger system that regulates the release of Ca(2+) ions from intracellular stores. Beta-arrestin family members regulate signaling by mediating both receptor desensitization and resensitization processes. This chain is 5-hydroxytryptamine receptor 1A (HTR1A), found in Gorilla gorilla gorilla (Western lowland gorilla).